Consider the following 130-residue polypeptide: Small ribosomal subunit protein uS8 (130 aa).

It belongs to the universal ribosomal protein uS8 family. Part of the 30S ribosomal subunit. Contacts proteins S5 and S12.

One of the primary rRNA binding proteins, it binds directly to 16S rRNA central domain where it helps coordinate assembly of the platform of the 30S subunit. This Aliivibrio salmonicida (strain LFI1238) (Vibrio salmonicida (strain LFI1238)) protein is Small ribosomal subunit protein uS8.